Reading from the N-terminus, the 498-residue chain is Hexokinase-1 (498 aa).

Residues 4–24 traverse the membrane as a helical segment; the sequence is VTVGAAVVGAAAVCAVAALIV. The region spanning 35 to 488 is the Hexokinase domain; the sequence is GRAMAILREF…SGIGAALLRA (454 aa). Residues 89–228 are hexokinase small subdomain; sequence QLVMKLGVFY…VLDMRVSALV (140 aa). ADP is bound by residues G104, T105, and N106. D-glucose-binding residues include T194, K195, N229, and D230. The hexokinase large subdomain stretch occupies residues 229-477; sequence NDTVGTLAGG…TSIVFVHSND (249 aa). T253 lines the ADP pocket. Positions 256, 284, and 315 each coordinate D-glucose. Residue G442 coordinates ADP.

It belongs to the hexokinase family. As to expression, expressed in young and mature leaves, stems, roots, stolons, and developing and mature tubers.

The protein resides in the plastid. It localises to the chloroplast outer membrane. It catalyses the reaction a D-hexose + ATP = a D-hexose 6-phosphate + ADP + H(+). The catalysed reaction is D-fructose + ATP = D-fructose 6-phosphate + ADP + H(+). It carries out the reaction D-glucose + ATP = D-glucose 6-phosphate + ADP + H(+). It functions in the pathway carbohydrate metabolism; hexose metabolism. The protein operates within carbohydrate degradation; glycolysis; D-glyceraldehyde 3-phosphate and glycerone phosphate from D-glucose: step 1/4. Its function is as follows. Fructose and glucose phosphorylating enzyme. May be involved in the phosphorylation of glucose during the export from plastids to cytosol. Seems neither to be involved in cell sugar sensing nor in carbohydrate metabolism in tuber. The sequence is that of Hexokinase-1 (HXK1) from Solanum tuberosum (Potato).